A 365-amino-acid chain; its full sequence is Alanine racemase (365 aa).

The Proton acceptor; specific for D-alanine role is filled by K35. K35 carries the N6-(pyridoxal phosphate)lysine modification. R130 contributes to the substrate binding site. Y256 (proton acceptor; specific for L-alanine) is an active-site residue. A substrate-binding site is contributed by M304.

It belongs to the alanine racemase family. It depends on pyridoxal 5'-phosphate as a cofactor.

The enzyme catalyses L-alanine = D-alanine. Its pathway is amino-acid biosynthesis; D-alanine biosynthesis; D-alanine from L-alanine: step 1/1. Catalyzes the interconversion of L-alanine and D-alanine. May also act on other amino acids. This Acidovorax ebreus (strain TPSY) (Diaphorobacter sp. (strain TPSY)) protein is Alanine racemase (alr).